The primary structure comprises 209 residues: uncharacterized protein (209 aa).

Residues 13-75 adopt a coiled-coil conformation; the sequence is LSAVDKQMDT…AINLAAVMTD (63 aa). The disordered stretch occupies residues 107–135; the sequence is ATPLPSSNTNNEQSMSTYSSSISGKTSET. The span at 110-119 shows a compositional bias: polar residues; it reads LPSSNTNNEQ. Low complexity predominate over residues 120 to 133; the sequence is SMSTYSSSISGKTS.

It belongs to the asfivirus K205R family.

Its subcellular location is the host cytoplasm. In terms of biological role, induces host endoplasmic reticulum stress and consequently activates autophagy and NF-kappa-B signaling pathway. In turn, may induce autophagy-mediated STING1 degradation and innate immune evasion. This is an uncharacterized protein from Ornithodoros (relapsing fever ticks).